A 60-amino-acid polypeptide reads, in one-letter code: Large ribosomal subunit protein bL32 (60 aa).

The tract at residues 1–60 (MAVQQNKKTPSKRGMHRSHDFLVAPQLSVEQTTGETHMRHHISPNGFYRGRKVLKTKNDE) is disordered. A compositionally biased stretch (basic residues) spans 49 to 60 (RGRKVLKTKNDE).

Belongs to the bacterial ribosomal protein bL32 family.

This chain is Large ribosomal subunit protein bL32, found in Herminiimonas arsenicoxydans.